The primary structure comprises 221 residues: GTP cyclohydrolase 1 (221 aa).

Zn(2+)-binding residues include Cys109, His112, and Cys180.

This sequence belongs to the GTP cyclohydrolase I family. Toroid-shaped homodecamer, composed of two pentamers of five dimers.

The catalysed reaction is GTP + H2O = 7,8-dihydroneopterin 3'-triphosphate + formate + H(+). It participates in cofactor biosynthesis; 7,8-dihydroneopterin triphosphate biosynthesis; 7,8-dihydroneopterin triphosphate from GTP: step 1/1. The sequence is that of GTP cyclohydrolase 1 from Serratia proteamaculans (strain 568).